Here is a 434-residue protein sequence, read N- to C-terminus: GTPase Obg (434 aa).

In terms of domain architecture, Obg spans 2 to 160; sequence PTFVDQTKIE…RVLRLELKLL (159 aa). The OBG-type G domain occupies 161–334; that stretch reads ADVGLVGFPS…LMNDTATLVE (174 aa). GTP is bound by residues 167 to 174, 192 to 196, 214 to 217, 284 to 287, and 315 to 317; these read GFPSVGKS, FTTLT, DLPG, SQMD, and SSV. Mg(2+) is bound by residues Ser174 and Thr194. The 79-residue stretch at 356 to 434 folds into the OCT domain; that stretch reads YKAPQKNEFT…IGKFVFEFVQ (79 aa).

Belongs to the TRAFAC class OBG-HflX-like GTPase superfamily. OBG GTPase family. Monomer. Requires Mg(2+) as cofactor.

The protein resides in the cytoplasm. An essential GTPase which binds GTP, GDP and possibly (p)ppGpp with moderate affinity, with high nucleotide exchange rates and a fairly low GTP hydrolysis rate. Plays a role in control of the cell cycle, stress response, ribosome biogenesis and in those bacteria that undergo differentiation, in morphogenesis control. The protein is GTPase Obg of Lactobacillus helveticus (strain DPC 4571).